The following is a 245-amino-acid chain: GTP cyclohydrolase 1 type 2 homolog (245 aa).

The a divalent metal cation site is built by histidine 63, histidine 64, aspartate 100, histidine 213, and glutamate 217.

This sequence belongs to the GTP cyclohydrolase I type 2/NIF3 family. Homohexamer.

The sequence is that of GTP cyclohydrolase 1 type 2 homolog from Archaeoglobus fulgidus (strain ATCC 49558 / DSM 4304 / JCM 9628 / NBRC 100126 / VC-16).